The chain runs to 308 residues: Ferrochelatase (308 aa).

The Fe cation site is built by H167 and E239.

This sequence belongs to the ferrochelatase family.

It is found in the cytoplasm. The catalysed reaction is heme b + 2 H(+) = protoporphyrin IX + Fe(2+). Its pathway is porphyrin-containing compound metabolism; protoheme biosynthesis; protoheme from protoporphyrin-IX: step 1/1. In terms of biological role, catalyzes the ferrous insertion into protoporphyrin IX. This is Ferrochelatase from Thermoplasma acidophilum (strain ATCC 25905 / DSM 1728 / JCM 9062 / NBRC 15155 / AMRC-C165).